The sequence spans 574 residues: Sulfate adenylyltransferase (574 aa).

The segment at 1–169 (MANPPHGGVL…IEAINKLNHY (169 aa)) is N-terminal. The catalytic stretch occupies residues 170–394 (DYVALRYTPA…LRESSPPRHT (225 aa)). Residue Gln-197 participates in sulfate binding. ATP is bound by residues 197–200 (QTRN) and 291–294 (GRDH). Catalysis depends on residues Thr-198, Arg-199, and Asn-200. A sulfate-binding site is contributed by Arg-199. Position 295 (Ala-295) interacts with sulfate. Val-333 provides a ligand contact to ATP. Residues 395–574 (QGFTIFLTGY…LETEGFFDRS (180 aa)) form an allosteric regulation domain; adenylyl-sulfate kinase-like region. Residues 434 to 437 (DTVR), Arg-451, 477 to 478 (IA), and Arg-516 contribute to the 3'-phosphoadenylyl sulfate site.

It in the N-terminal section; belongs to the sulfate adenylyltransferase family. In the C-terminal section; belongs to the APS kinase family. As to quaternary structure, homohexamer. Dimer of trimers.

It localises to the cytoplasm. It carries out the reaction sulfate + ATP + H(+) = adenosine 5'-phosphosulfate + diphosphate. The protein operates within sulfur metabolism; hydrogen sulfide biosynthesis; sulfite from sulfate: step 1/3. Allosterically inhibited by 3'-phosphoadenosine 5'-phosphosulfate (PAPS). Its function is as follows. Catalyzes the first intracellular reaction of sulfate assimilation, forming adenosine-5'-phosphosulfate (APS) from inorganic sulfate and ATP. Plays an important role in sulfate activation as a component of the biosynthesis pathway of sulfur-containing amino acids. This is Sulfate adenylyltransferase from Aspergillus fumigatus (strain ATCC MYA-4609 / CBS 101355 / FGSC A1100 / Af293) (Neosartorya fumigata).